A 270-amino-acid polypeptide reads, in one-letter code: 4-hydroxy-tetrahydrodipicolinate reductase (270 aa).

7-12 (GANGRM) is an NAD(+) binding site. Position 34 (Arg34) interacts with NADP(+). Residues 97-99 (GTT) and 121-124 (SGNM) contribute to the NAD(+) site. His155 functions as the Proton donor/acceptor in the catalytic mechanism. His156 provides a ligand contact to (S)-2,3,4,5-tetrahydrodipicolinate. The Proton donor role is filled by Lys159. A (S)-2,3,4,5-tetrahydrodipicolinate-binding site is contributed by 165–166 (GT).

It belongs to the DapB family.

The protein resides in the cytoplasm. It carries out the reaction (S)-2,3,4,5-tetrahydrodipicolinate + NAD(+) + H2O = (2S,4S)-4-hydroxy-2,3,4,5-tetrahydrodipicolinate + NADH + H(+). The catalysed reaction is (S)-2,3,4,5-tetrahydrodipicolinate + NADP(+) + H2O = (2S,4S)-4-hydroxy-2,3,4,5-tetrahydrodipicolinate + NADPH + H(+). The protein operates within amino-acid biosynthesis; L-lysine biosynthesis via DAP pathway; (S)-tetrahydrodipicolinate from L-aspartate: step 4/4. In terms of biological role, catalyzes the conversion of 4-hydroxy-tetrahydrodipicolinate (HTPA) to tetrahydrodipicolinate. The chain is 4-hydroxy-tetrahydrodipicolinate reductase from Bartonella tribocorum (strain CIP 105476 / IBS 506).